The chain runs to 147 residues: Hemoglobin subunit delta (147 aa).

Positions 3–147 constitute a Globin domain; that stretch reads HLTPEEKTAV…VANALAHKYH (145 aa). Position 51 is a phosphoserine (Ser51). Heme b contacts are provided by His64 and His93.

The protein belongs to the globin family. As to quaternary structure, heterotetramer of two delta chains and two alpha chains. Red blood cells.

This Gorilla gorilla gorilla (Western lowland gorilla) protein is Hemoglobin subunit delta (HBD).